A 249-amino-acid polypeptide reads, in one-letter code: ATP synthase subunit a, chloroplastic (249 aa).

The next 5 membrane-spanning stretches (helical) occupy residues 40–60 (QVLITSWVVIAILLGSAVLAV), 97–117 (VPFIGTLFLFIFVSNWSGALL), 136–156 (INTTVALALLTSAAYFYAGLS), 201–221 (LVVVVLVSLVPLVVPIPVMFL), and 222–242 (GLFTSGIQALIFATLAAAYIG).

This sequence belongs to the ATPase A chain family. In terms of assembly, F-type ATPases have 2 components, CF(1) - the catalytic core - and CF(0) - the membrane proton channel. CF(1) has five subunits: alpha(3), beta(3), gamma(1), delta(1), epsilon(1). CF(0) has four main subunits: a, b, b' and c.

The protein localises to the plastid. Its subcellular location is the chloroplast thylakoid membrane. In terms of biological role, key component of the proton channel; it plays a direct role in the translocation of protons across the membrane. This is ATP synthase subunit a, chloroplastic from Arabis hirsuta (Hairy rock-cress).